Here is a 505-residue protein sequence, read N- to C-terminus: uncharacterized protein (505 aa).

The interval 1–52 (MVDGSIHVPVQSHEGQHDNSSSLNEEIQTSQDPLGIVESYQESSTSDFDKSH) is disordered. A compositionally biased stretch (polar residues) spans 18 to 32 (DNSSSLNEEIQTSQD). 10 helical membrane-spanning segments follow: residues 141 to 161 (FWIV…TNTF), 173 to 193 (AFQT…YTVF), 208 to 228 (GWKY…VVLA), 235 to 255 (LSAS…SFIF), 265 to 285 (ILGV…DVIS), 290 to 310 (SAVN…CYGV), 326 to 346 (VVIG…TFIF), 362 to 382 (GYLA…PILF), 389 to 409 (FYNI…IHVF), and 415 to 435 (WLYP…HVFV). Phosphoserine occurs at positions 463, 466, and 467.

Belongs to the SLC35F solute transporter family.

The protein resides in the golgi apparatus membrane. This is an uncharacterized protein from Schizosaccharomyces pombe (strain 972 / ATCC 24843) (Fission yeast).